The chain runs to 448 residues: Trigger factor (448 aa).

A PPIase FKBP-type domain is found at 167–253; sequence GSIVRVDFVE…VKDIKRRDIP (87 aa).

It belongs to the FKBP-type PPIase family. Tig subfamily.

Its subcellular location is the cytoplasm. The catalysed reaction is [protein]-peptidylproline (omega=180) = [protein]-peptidylproline (omega=0). In terms of biological role, involved in protein export. Acts as a chaperone by maintaining the newly synthesized protein in an open conformation. Functions as a peptidyl-prolyl cis-trans isomerase. This Borrelia duttonii (strain Ly) protein is Trigger factor.